The primary structure comprises 488 residues: UDP-N-acetylmuramate--L-alanine ligase (488 aa).

122–128 contributes to the ATP binding site; the sequence is GTHGKTT.

This sequence belongs to the MurCDEF family.

The protein resides in the cytoplasm. It carries out the reaction UDP-N-acetyl-alpha-D-muramate + L-alanine + ATP = UDP-N-acetyl-alpha-D-muramoyl-L-alanine + ADP + phosphate + H(+). It participates in cell wall biogenesis; peptidoglycan biosynthesis. Functionally, cell wall formation. This Mycobacterium ulcerans (strain Agy99) protein is UDP-N-acetylmuramate--L-alanine ligase.